The chain runs to 248 residues: Tetrachloro-P-hydroquinone reductive dehalogenase (248 aa).

A GST N-terminal domain is found at 2–84 (PEVSLYNYTM…EAAKLGKVGI (83 aa)). Residues 133 to 248 (YAEKYPELRS…RVMPNWKGGI (116 aa)) form the GST C-terminal domain.

Belongs to the GST superfamily. In terms of assembly, homodimer.

The enzyme catalyses 2,6-dichlorohydroquinone + glutathione disulfide + chloride + H(+) = 2,3,6-trichlorohydroquinone + 2 glutathione. The catalysed reaction is 2,3,6-trichlorohydroquinone + glutathione disulfide + chloride = 2,3,5,6-tetrachlorohydroquinone + 2 glutathione. The protein operates within xenobiotic degradation; pentachlorophenol degradation. Its function is as follows. Sequential reduction of tetrachloro-p-hydroquinone to monochlorophenol, using glutathione as the reducing agent. This chain is Tetrachloro-P-hydroquinone reductive dehalogenase (pcpC), found in Sphingobium chlorophenolicum.